We begin with the raw amino-acid sequence, 85 residues long: MERGNRKSRIGVVVSNKMTKTVVVKVERRVADPKYGKIVTKAEKYKAHDEDQACQIGDRVRIVETRPISKDKRWRVAETIEKAEA.

This sequence belongs to the universal ribosomal protein uS17 family. Part of the 30S ribosomal subunit.

In terms of biological role, one of the primary rRNA binding proteins, it binds specifically to the 5'-end of 16S ribosomal RNA. This is Small ribosomal subunit protein uS17 from Anaeromyxobacter dehalogenans (strain 2CP-1 / ATCC BAA-258).